We begin with the raw amino-acid sequence, 418 residues long: Transcription termination factor Rho (418 aa).

A Rho RNA-BD domain is found at 48 to 123; sequence DIYGDGVLEI…LKVNDINFDR (76 aa). ATP is bound by residues 169–174, 181–186, and Arg212; these read GKGQRG and KAGKTM.

This sequence belongs to the Rho family. Homohexamer. The homohexamer assembles into an open ring structure.

In terms of biological role, facilitates transcription termination by a mechanism that involves Rho binding to the nascent RNA, activation of Rho's RNA-dependent ATPase activity, and release of the mRNA from the DNA template. The sequence is that of Transcription termination factor Rho from Allochromatium vinosum (strain ATCC 17899 / DSM 180 / NBRC 103801 / NCIMB 10441 / D) (Chromatium vinosum).